The chain runs to 363 residues: Tetraacyldisaccharide 4'-kinase (363 aa).

62–69 (RVGGTGKT) lines the ATP pocket.

This sequence belongs to the LpxK family.

The catalysed reaction is a lipid A disaccharide + ATP = a lipid IVA + ADP + H(+). The protein operates within glycolipid biosynthesis; lipid IV(A) biosynthesis; lipid IV(A) from (3R)-3-hydroxytetradecanoyl-[acyl-carrier-protein] and UDP-N-acetyl-alpha-D-glucosamine: step 6/6. In terms of biological role, transfers the gamma-phosphate of ATP to the 4'-position of a tetraacyldisaccharide 1-phosphate intermediate (termed DS-1-P) to form tetraacyldisaccharide 1,4'-bis-phosphate (lipid IVA). The polypeptide is Tetraacyldisaccharide 4'-kinase (Polynucleobacter asymbioticus (strain DSM 18221 / CIP 109841 / QLW-P1DMWA-1) (Polynucleobacter necessarius subsp. asymbioticus)).